A 577-amino-acid chain; its full sequence is Aspartate--tRNA ligase (577 aa).

Glu171 provides a ligand contact to L-aspartate. The interval 195 to 198 (QLFK) is aspartate. Arg217 provides a ligand contact to L-aspartate. Residues 217–219 (RDE) and Gln226 each bind ATP. Position 437 (His437) interacts with L-aspartate. An ATP-binding site is contributed by Glu472. Residue Arg479 participates in L-aspartate binding. 524–527 (GFDR) serves as a coordination point for ATP.

This sequence belongs to the class-II aminoacyl-tRNA synthetase family. Type 1 subfamily. Homodimer.

Its subcellular location is the cytoplasm. It catalyses the reaction tRNA(Asp) + L-aspartate + ATP = L-aspartyl-tRNA(Asp) + AMP + diphosphate. Functionally, catalyzes the attachment of L-aspartate to tRNA(Asp) in a two-step reaction: L-aspartate is first activated by ATP to form Asp-AMP and then transferred to the acceptor end of tRNA(Asp). This chain is Aspartate--tRNA ligase, found in Deinococcus geothermalis (strain DSM 11300 / CIP 105573 / AG-3a).